The sequence spans 151 residues: Ribosome maturation factor RimP (151 aa).

Belongs to the RimP family.

It is found in the cytoplasm. Required for maturation of 30S ribosomal subunits. This is Ribosome maturation factor RimP from Shewanella sediminis (strain HAW-EB3).